We begin with the raw amino-acid sequence, 397 residues long: UDP-galactose translocator (397 aa).

The disordered stretch occupies residues 1–21 (MAAVGSGGSNAAAGPGAVSAG). The next 10 membrane-spanning stretches (helical) occupy residues 3–23 (AVGS…AGSL), 37–57 (YISL…IRYA), 65–85 (FFAT…CLLL), 97–117 (LALF…KLAV), 140–160 (TFQV…VLML), 169–189 (WASL…QAGG), 200–220 (GAGL…GVYF), 238–258 (LGLF…GTAV), 269–289 (PAVW…AVVV), and 315–335 (LFGF…IGAV). Over residues 9 to 21 (SNAAAGPGAVSAG) the composition is skewed to low complexity. A disordered region spans residues 355–397 (ASASTSGPCTHQQPPGQPPPPKLSSHRADLSTEPFLPKSVLVK).

This sequence belongs to the nucleotide-sugar transporter family. SLC35A subfamily. Interacts with SLC35A3; the interaction is reduced in the presence of SLC35A4. Found in a complex with SLC35A3 and SLC35A4.

The protein localises to the golgi apparatus membrane. The enzyme catalyses UMP(out) + UDP-alpha-D-galactose(in) = UMP(in) + UDP-alpha-D-galactose(out). It carries out the reaction UDP-N-acetyl-alpha-D-galactosamine(in) + UMP(out) = UDP-N-acetyl-alpha-D-galactosamine(out) + UMP(in). It catalyses the reaction UMP(out) + UDP-alpha-D-glucose(in) = UMP(in) + UDP-alpha-D-glucose(out). The catalysed reaction is UMP(out) + UDP-N-acetyl-alpha-D-glucosamine(in) = UMP(in) + UDP-N-acetyl-alpha-D-glucosamine(out). The enzyme catalyses UDP-alpha-D-galactose(in) + AMP(out) = UDP-alpha-D-galactose(out) + AMP(in). It carries out the reaction UDP-alpha-D-galactose(in) + CMP(out) = UDP-alpha-D-galactose(out) + CMP(in). It catalyses the reaction UDP-N-acetyl-alpha-D-galactosamine(out) + UDP-alpha-D-galactose(in) = UDP-N-acetyl-alpha-D-galactosamine(in) + UDP-alpha-D-galactose(out). The catalysed reaction is UDP-N-acetyl-alpha-D-glucosamine(out) + UDP-alpha-D-galactose(in) = UDP-N-acetyl-alpha-D-glucosamine(in) + UDP-alpha-D-galactose(out). The enzyme catalyses UDP-alpha-D-galactose(in) + UDP-alpha-D-glucose(out) = UDP-alpha-D-galactose(out) + UDP-alpha-D-glucose(in). It carries out the reaction UMP(out) + CMP(in) = UMP(in) + CMP(out). It catalyses the reaction UMP(out) + AMP(in) = UMP(in) + AMP(out). In terms of biological role, transports uridine diphosphate galactose (UDP-galactose) from the cytosol into the Golgi apparatus, functioning as an antiporter that exchanges UDP-galactose for UMP. It is also able to exchange UDP-galactose for AMP and CMP, and to transport UDP-N-acetylgalactosamine (UDP-GalNAc) and other nucleotide sugars. As a provider of UDP-galactose to galactosyltransferases present in the Golgi apparatus, it is necessary for globotriaosylceramide/globoside (Gb3Cer) synthesis from lactosylceramide. This chain is UDP-galactose translocator, found in Canis lupus familiaris (Dog).